A 178-amino-acid polypeptide reads, in one-letter code: Protein FLOWERING LOCUS T 1 (178 aa).

Belongs to the phosphatidylethanolamine-binding protein family. As to expression, expressed in leaves but not in shoot apex.

Involved in the regulation of vernalization and of flowering time. The sequence is that of Protein FLOWERING LOCUS T 1 from Brachypodium distachyon (Purple false brome).